The chain runs to 373 residues: L-threonine 3-dehydrogenase, mitochondrial (373 aa).

NAD(+) contacts are provided by residues 62-67 (GGLGQL), 88-90 (DIR), 106-107 (NI), tyrosine 195, lysine 199, and isoleucine 225. Catalysis depends on tyrosine 195, which acts as the Proton donor/acceptor.

The protein belongs to the NAD(P)-dependent epimerase/dehydratase family. In terms of assembly, homodimer.

The protein resides in the mitochondrion. The catalysed reaction is L-threonine + NAD(+) = (2S)-2-amino-3-oxobutanoate + NADH + H(+). The protein operates within amino-acid degradation; L-threonine degradation via oxydo-reductase pathway; glycine from L-threonine: step 1/2. Catalyzes the NAD(+)-dependent oxidation of L-threonine to 2-amino-3-ketobutyrate, mediating L-threonine catabolism. The chain is L-threonine 3-dehydrogenase, mitochondrial from Mus musculus (Mouse).